A 154-amino-acid polypeptide reads, in one-letter code: Hydroperoxy fatty acid reductase Gpx2 (154 aa).

Cys34 is a catalytic residue.

This sequence belongs to the glutathione peroxidase family. As to quaternary structure, monomer.

The catalysed reaction is a hydroperoxy polyunsaturated fatty acid + NADPH + H(+) = a hydroxy polyunsaturated fatty acid + NADP(+) + H2O. Its activity is regulated as follows. Mercaptosuccinate, pCMB, and nethylmaleimide act as inhibitors of the catalytic activity. Hydroperoxy fatty acid reductase essential for the removal of lipid hydroperoxides under normal and stress conditions, leading to the protection of membrane integrity. The protein is Hydroperoxy fatty acid reductase Gpx2 (gpx2) of Synechocystis sp. (strain ATCC 27184 / PCC 6803 / Kazusa).